Reading from the N-terminus, the 197-residue chain is NADH-quinone oxidoreductase subunit C (197 aa).

Belongs to the complex I 30 kDa subunit family. NDH-1 is composed of 14 different subunits. Subunits NuoB, C, D, E, F, and G constitute the peripheral sector of the complex.

The protein resides in the cell inner membrane. It catalyses the reaction a quinone + NADH + 5 H(+)(in) = a quinol + NAD(+) + 4 H(+)(out). Its function is as follows. NDH-1 shuttles electrons from NADH, via FMN and iron-sulfur (Fe-S) centers, to quinones in the respiratory chain. The immediate electron acceptor for the enzyme in this species is believed to be ubiquinone. Couples the redox reaction to proton translocation (for every two electrons transferred, four hydrogen ions are translocated across the cytoplasmic membrane), and thus conserves the redox energy in a proton gradient. The sequence is that of NADH-quinone oxidoreductase subunit C from Rickettsia prowazekii (strain Madrid E).